We begin with the raw amino-acid sequence, 369 residues long: 1-aminocyclopropane-1-carboxylate oxidase homolog 2 (369 aa).

In terms of domain architecture, Fe2OG dioxygenase spans 217–318; the sequence is KGLRMLCHYF…VSVACFFHTH (102 aa). Positions 241, 243, and 297 each coordinate Fe cation.

This sequence belongs to the iron/ascorbate-dependent oxidoreductase family. Fe cation is required as a cofactor.

This is 1-aminocyclopropane-1-carboxylate oxidase homolog 2 from Arabidopsis thaliana (Mouse-ear cress).